A 642-amino-acid polypeptide reads, in one-letter code: 1-deoxy-D-xylulose-5-phosphate synthase (642 aa).

Thiamine diphosphate is bound by residues histidine 79 and 120 to 122 (AHS). Aspartate 155 is a Mg(2+) binding site. Residues 156–157 (GS), asparagine 184, tyrosine 293, and glutamate 375 contribute to the thiamine diphosphate site. Residue asparagine 184 participates in Mg(2+) binding.

Belongs to the transketolase family. DXPS subfamily. In terms of assembly, homodimer. Mg(2+) serves as cofactor. Thiamine diphosphate is required as a cofactor.

It carries out the reaction D-glyceraldehyde 3-phosphate + pyruvate + H(+) = 1-deoxy-D-xylulose 5-phosphate + CO2. It functions in the pathway metabolic intermediate biosynthesis; 1-deoxy-D-xylulose 5-phosphate biosynthesis; 1-deoxy-D-xylulose 5-phosphate from D-glyceraldehyde 3-phosphate and pyruvate: step 1/1. Functionally, catalyzes the acyloin condensation reaction between C atoms 2 and 3 of pyruvate and glyceraldehyde 3-phosphate to yield 1-deoxy-D-xylulose-5-phosphate (DXP). The chain is 1-deoxy-D-xylulose-5-phosphate synthase from Ruegeria pomeroyi (strain ATCC 700808 / DSM 15171 / DSS-3) (Silicibacter pomeroyi).